Reading from the N-terminus, the 360-residue chain is Photosystem II protein D1 2 (360 aa).

Helical transmembrane passes span 29 to 46, 118 to 133, and 142 to 156; these read YIGW…AATI, HFLI…EWEL, and WIPV…AATA. Residue H118 coordinates chlorophyll a. Y126 serves as a coordination point for pheophytin a. Residues D170 and E189 each contribute to the [CaMn4O5] cluster site. A helical transmembrane segment spans residues 197–218; sequence FHMLGVAGVFGGALFAAMHGSL. H198 contributes to the chlorophyll a binding site. Residues H215 and 264-265 each bind a quinone; that span reads SF. H215 lines the Fe cation pocket. Residue H272 participates in Fe cation binding. A helical transmembrane segment spans residues 274–288; that stretch reads FLAAWPVVGIWFAAL. [CaMn4O5] cluster is bound by residues H332, E333, D342, and A344. Positions 345-360 are excised as a propeptide; sequence SGELAPVAMIAPSIEA.

The protein belongs to the reaction center PufL/M/PsbA/D family. As to quaternary structure, PSII is composed of 1 copy each of membrane proteins PsbA, PsbB, PsbC, PsbD, PsbE, PsbF, PsbH, PsbI, PsbJ, PsbK, PsbL, PsbM, PsbT, PsbX, PsbY, PsbZ, Psb30/Ycf12, peripheral proteins PsbO, CyanoQ (PsbQ), PsbU, PsbV and a large number of cofactors. It forms dimeric complexes. The D1/D2 heterodimer binds P680, chlorophylls that are the primary electron donor of PSII, and subsequent electron acceptors. It shares a non-heme iron and each subunit binds pheophytin, quinone, additional chlorophylls, carotenoids and lipids. D1 provides most of the ligands for the Mn4-Ca-O5 cluster of the oxygen-evolving complex (OEC). There is also a Cl(-1) ion associated with D1 and D2, which is required for oxygen evolution. The PSII complex binds additional chlorophylls, carotenoids and specific lipids. serves as cofactor. Post-translationally, tyr-161 forms a radical intermediate that is referred to as redox-active TyrZ, YZ or Y-Z. In terms of processing, C-terminally processed by CtpA; processing is essential to allow assembly of the oxygen-evolving complex and thus photosynthetic growth.

It localises to the cellular thylakoid membrane. It catalyses the reaction 2 a plastoquinone + 4 hnu + 2 H2O = 2 a plastoquinol + O2. Functionally, photosystem II (PSII) is a light-driven water:plastoquinone oxidoreductase that uses light energy to abstract electrons from H(2)O, generating O(2) and a proton gradient subsequently used for ATP formation. It consists of a core antenna complex that captures photons, and an electron transfer chain that converts photonic excitation into a charge separation. The D1/D2 (PsbA/PsbD) reaction center heterodimer binds P680, the primary electron donor of PSII as well as several subsequent electron acceptors. In Synechococcus elongatus, this protein is Photosystem II protein D1 2.